Here is a 246-residue protein sequence, read N- to C-terminus: Putative carboxymethylenebutenolidase (246 aa).

Catalysis depends on residues C127, D183, and H215.

The protein belongs to the dienelactone hydrolase family.

It carries out the reaction 2-(5-oxo-2,5-dihydrofuran-2-ylidene)acetate + H2O = 4-oxohex-2-enedioate + H(+). The sequence is that of Putative carboxymethylenebutenolidase from Synechocystis sp. (strain ATCC 27184 / PCC 6803 / Kazusa).